We begin with the raw amino-acid sequence, 80 residues long: Exodeoxyribonuclease 7 small subunit (80 aa).

The disordered stretch occupies residues 60–80; the sequence is LIDSDGTEHNLDPNNASAPEE. Positions 61–70 are enriched in basic and acidic residues; the sequence is IDSDGTEHNL. Residues 71 to 80 show a composition bias toward polar residues; that stretch reads DPNNASAPEE.

This sequence belongs to the XseB family. As to quaternary structure, heterooligomer composed of large and small subunits.

It is found in the cytoplasm. The enzyme catalyses Exonucleolytic cleavage in either 5'- to 3'- or 3'- to 5'-direction to yield nucleoside 5'-phosphates.. Functionally, bidirectionally degrades single-stranded DNA into large acid-insoluble oligonucleotides, which are then degraded further into small acid-soluble oligonucleotides. This is Exodeoxyribonuclease 7 small subunit from Lactobacillus acidophilus (strain ATCC 700396 / NCK56 / N2 / NCFM).